Consider the following 327-residue polypeptide: Biotin synthase (327 aa).

A Radical SAM core domain is found at 49 to 273 (FNKDKIDLCS…ICIARIALPD (225 aa)). Residues Cys-67, Cys-71, and Cys-74 each coordinate [4Fe-4S] cluster. [2Fe-2S] cluster contacts are provided by Ser-110, Cys-142, Cys-201, and Arg-277.

This sequence belongs to the radical SAM superfamily. Biotin synthase family. In terms of assembly, homodimer. It depends on [4Fe-4S] cluster as a cofactor. Requires [2Fe-2S] cluster as cofactor.

The enzyme catalyses (4R,5S)-dethiobiotin + (sulfur carrier)-SH + 2 reduced [2Fe-2S]-[ferredoxin] + 2 S-adenosyl-L-methionine = (sulfur carrier)-H + biotin + 2 5'-deoxyadenosine + 2 L-methionine + 2 oxidized [2Fe-2S]-[ferredoxin]. The protein operates within cofactor biosynthesis; biotin biosynthesis; biotin from 7,8-diaminononanoate: step 2/2. In terms of biological role, catalyzes the conversion of dethiobiotin (DTB) to biotin by the insertion of a sulfur atom into dethiobiotin via a radical-based mechanism. In Methanococcus maripaludis (strain C6 / ATCC BAA-1332), this protein is Biotin synthase.